The primary structure comprises 211 residues: ATP phosphoribosyltransferase (211 aa).

This sequence belongs to the ATP phosphoribosyltransferase family. Short subfamily. Heteromultimer composed of HisG and HisZ subunits.

The protein localises to the cytoplasm. It carries out the reaction 1-(5-phospho-beta-D-ribosyl)-ATP + diphosphate = 5-phospho-alpha-D-ribose 1-diphosphate + ATP. The protein operates within amino-acid biosynthesis; L-histidine biosynthesis; L-histidine from 5-phospho-alpha-D-ribose 1-diphosphate: step 1/9. In terms of biological role, catalyzes the condensation of ATP and 5-phosphoribose 1-diphosphate to form N'-(5'-phosphoribosyl)-ATP (PR-ATP). Has a crucial role in the pathway because the rate of histidine biosynthesis seems to be controlled primarily by regulation of HisG enzymatic activity. The polypeptide is ATP phosphoribosyltransferase (Bacillus cereus (strain AH187)).